The primary structure comprises 164 residues: Protein SprT (164 aa).

The SprT-like domain maps to 14 to 156; the sequence is QLAESFFKRP…LCRRCRNTLV (143 aa). H69 is a Zn(2+) binding site. E70 is an active-site residue. A Zn(2+)-binding site is contributed by H73.

Belongs to the SprT family. It depends on Zn(2+) as a cofactor.

It localises to the cytoplasm. In Pseudomonas fluorescens (strain Pf0-1), this protein is Protein SprT.